The primary structure comprises 396 residues: Period circadian protein (396 aa).

Disordered regions lie at residues 27 to 120 (VTAP…APPV), 167 to 188 (SGPGPGHGHGIKRGGSHSWEGE), 253 to 275 (GGNGNVGSGNGNNNQPSTNQYTQ), and 333 to 362 (SPSSTNTNPNRPHKHAHVHNSSEKPSTSQA). A compositionally biased stretch (gly residues) spans 93–114 (GTSGTGNSGDGGGGGGANGTGS). Positions 253-262 (GGNGNVGSGN) are enriched in gly residues. The segment covering 333-342 (SPSSTNTNPN) has biased composition (low complexity).

In terms of assembly, forms a heterodimer with timeless (TIM); the complex then translocates into the nucleus. In terms of processing, phosphorylated with a circadian rhythmicity, probably by the double-time protein (dbt). Phosphorylation could be implicated in the stability of per monomer and in the formation of heterodimer per-tim.

The protein localises to the nucleus. The protein resides in the cytoplasm. Its subcellular location is the perinuclear region. Functionally, essential for biological clock functions. Determines the period length of circadian and ultradian rhythms; an increase in PER dosage leads to shortened circadian rhythms and a decrease leads to lengthened circadian rhythms. Essential for the circadian rhythmicity of locomotor activity, eclosion behavior, and for the rhythmic component of the male courtship song that originates in the thoracic nervous system. The biological cycle depends on the rhythmic formation and nuclear localization of the TIM-PER complex. Light induces the degradation of TIM, which promotes elimination of PER. Nuclear activity of the heterodimer coordinatively regulates PER and TIM transcription through a negative feedback loop. Behaves as a negative element in circadian transcriptional loop. Does not appear to bind DNA, suggesting indirect transcriptional inhibition. This chain is Period circadian protein (per), found in Drosophila paulistorum (Fruit fly).